A 571-amino-acid polypeptide reads, in one-letter code: Proline--tRNA ligase (571 aa).

The protein belongs to the class-II aminoacyl-tRNA synthetase family. ProS type 1 subfamily. In terms of assembly, homodimer.

The protein resides in the cytoplasm. The catalysed reaction is tRNA(Pro) + L-proline + ATP = L-prolyl-tRNA(Pro) + AMP + diphosphate. Functionally, catalyzes the attachment of proline to tRNA(Pro) in a two-step reaction: proline is first activated by ATP to form Pro-AMP and then transferred to the acceptor end of tRNA(Pro). As ProRS can inadvertently accommodate and process non-cognate amino acids such as alanine and cysteine, to avoid such errors it has two additional distinct editing activities against alanine. One activity is designated as 'pretransfer' editing and involves the tRNA(Pro)-independent hydrolysis of activated Ala-AMP. The other activity is designated 'posttransfer' editing and involves deacylation of mischarged Ala-tRNA(Pro). The misacylated Cys-tRNA(Pro) is not edited by ProRS. In Pseudomonas putida (strain ATCC 700007 / DSM 6899 / JCM 31910 / BCRC 17059 / LMG 24140 / F1), this protein is Proline--tRNA ligase.